Consider the following 125-residue polypeptide: MAVSKEDILGAIADMSVMDLVELIEAMEEKFGVTAAAAVAAAPAAAGGDAAAAEEQTEFDVVLSSFGDKKVGVIKAVREVTGLGLKEAKELVESAPAPVKEGATKDEAEEIKKKIEEAGGTAELK.

Positions 96 to 125 (PAPVKEGATKDEAEEIKKKIEEAGGTAELK) are disordered. Basic and acidic residues predominate over residues 102–117 (GATKDEAEEIKKKIEE).

It belongs to the bacterial ribosomal protein bL12 family. In terms of assembly, homodimer. Part of the ribosomal stalk of the 50S ribosomal subunit. Forms a multimeric L10(L12)X complex, where L10 forms an elongated spine to which 2 to 4 L12 dimers bind in a sequential fashion. Binds GTP-bound translation factors.

In terms of biological role, forms part of the ribosomal stalk which helps the ribosome interact with GTP-bound translation factors. Is thus essential for accurate translation. In Alcanivorax borkumensis (strain ATCC 700651 / DSM 11573 / NCIMB 13689 / SK2), this protein is Large ribosomal subunit protein bL12.